The sequence spans 237 residues: Uridylate kinase (237 aa).

13–16 (KLSG) contributes to the ATP binding site. A UMP-binding site is contributed by G53. The ATP site is built by G54 and R58. Residues D73 and 134-141 (AGLPYFST) each bind UMP. ATP-binding residues include N162, Y168, and D171.

Belongs to the UMP kinase family. Homohexamer.

The protein localises to the cytoplasm. It carries out the reaction UMP + ATP = UDP + ADP. Its pathway is pyrimidine metabolism; CTP biosynthesis via de novo pathway; UDP from UMP (UMPK route): step 1/1. With respect to regulation, inhibited by UTP. In terms of biological role, catalyzes the reversible phosphorylation of UMP to UDP. The chain is Uridylate kinase from Leifsonia xyli subsp. xyli (strain CTCB07).